A 221-amino-acid polypeptide reads, in one-letter code: Octanoyltransferase (221 aa).

Positions 31–216 constitute a BPL/LPL catalytic domain; it reads GQIGDTLLLL…SLCAIFDLRP (186 aa). Substrate-binding positions include 76 to 83, 145 to 147, and 159 to 161; these read RGGEVTYH, AIG, and GLA. Cys-177 acts as the Acyl-thioester intermediate in catalysis.

Belongs to the LipB family.

The protein localises to the cytoplasm. It carries out the reaction octanoyl-[ACP] + L-lysyl-[protein] = N(6)-octanoyl-L-lysyl-[protein] + holo-[ACP] + H(+). It functions in the pathway protein modification; protein lipoylation via endogenous pathway; protein N(6)-(lipoyl)lysine from octanoyl-[acyl-carrier-protein]: step 1/2. Functionally, catalyzes the transfer of endogenously produced octanoic acid from octanoyl-acyl-carrier-protein onto the lipoyl domains of lipoate-dependent enzymes. Lipoyl-ACP can also act as a substrate although octanoyl-ACP is likely to be the physiological substrate. This chain is Octanoyltransferase, found in Chloroflexus aggregans (strain MD-66 / DSM 9485).